Here is a 1898-residue protein sequence, read N- to C-terminus: Receptor-type tyrosine-protein phosphatase F (1898 aa).

The first 29 residues, 1 to 29, serve as a signal peptide directing secretion; the sequence is MAPEPAPGRRMVPLVPALVMLGLMAGAHG. The Extracellular segment spans residues 30–1254; sequence DSKPVFVKVP…QQQEEPEMLW (1225 aa). Ig-like C2-type domains follow at residues 33–123, 135–224, and 232–314; these read PVFV…AKLS, PTID…ANLY, and PRFS…AQVT. Cysteine 54 and cysteine 107 are disulfide-bonded. Residue 68–77 participates in heparin binding; sequence KKGKKVSSQR. Asparagine 117 is a glycosylation site (N-linked (GlcNAc...) asparagine). Cysteine 156 and cysteine 207 are disulfide-bonded. 2 N-linked (GlcNAc...) asparagine glycosylation sites follow: asparagine 250 and asparagine 295. A disulfide bridge connects residues cysteine 253 and cysteine 298. Fibronectin type-III domains lie at 321-411, 416-510, 514-604, 609-706, 711-810, 811-905, 909-1001, and 1005-1089; these read PPID…TGEQ, PPRR…TQQG, QPAD…TAQS, PPQK…TDED, PPRK…TTGA, VPGR…PEDA, FPQN…TMPM, and FAKN…TAPD. The disordered stretch occupies residues 693-713; sequence GPESSPVLVRTDEDVPSGPPR. Residue asparagine 721 is glycosylated (N-linked (GlcNAc...) asparagine). Residues asparagine 941 and asparagine 957 are each glycosylated (N-linked (GlcNAc...) asparagine). The chain crosses the membrane as a helical span at residues 1255-1275; the sequence is VTGPVLAVILIILIVIAILLF. Over 1276–1898 the chain is Cytoplasmic; the sequence is KRKRTHSPSS…YLGSFDHYAT (623 aa). Serine 1296 is modified (phosphoserine). Tyrosine-protein phosphatase domains are found at residues 1343-1598 and 1630-1889; these read FSQE…LLEA and MELE…ALEY. Residues aspartate 1507, 1539–1545, and glutamine 1583 each bind substrate; that span reads CSAGVGR. The Phosphocysteine intermediate role is filled by cysteine 1539. Residue cysteine 1830 is the Phosphocysteine intermediate of the active site.

The protein belongs to the protein-tyrosine phosphatase family. Receptor class 2A subfamily. As to quaternary structure, interacts with GRIP1. Interacts with PPFIA1, PPFIA2 and PPFIA3. Interacts with PTPRF.

It localises to the membrane. The enzyme catalyses O-phospho-L-tyrosyl-[protein] + H2O = L-tyrosyl-[protein] + phosphate. In terms of biological role, possible cell adhesion receptor. It possesses an intrinsic protein tyrosine phosphatase activity (PTPase) and dephosphorylates EPHA2 regulating its activity. The first PTPase domain has enzymatic activity, while the second one seems to affect the substrate specificity of the first one. The sequence is that of Receptor-type tyrosine-protein phosphatase F (Ptprf) from Rattus norvegicus (Rat).